We begin with the raw amino-acid sequence, 183 residues long: Ferredoxin-2, mitochondrial (183 aa).

A mitochondrion-targeting transit peptide spans 1–52 (MAASMARGGVSARVLLQAARGTWWNRPGGTSGSGEGVALGTTRKFQATGSRP). The tract at residues 45–65 (FQATGSRPAGEEDAGGPERPG) is disordered. Residues 68-170 (VNVVFVDRSG…GAEFTLPKIT (103 aa)) form the 2Fe-2S ferredoxin-type domain. Residues Cys105, Cys111, Cys114, and Cys151 each coordinate [2Fe-2S] cluster.

The protein belongs to the adrenodoxin/putidaredoxin family. In terms of assembly, component of the mitochondrial core iron-sulfur cluster (ISC) complex composed of NFS1, LYRM4, NDUFAB1, ISCU, FXN, and FDX2; this complex is a heterohexamer containing two copies of each monomer. Form a heterodimer complex with NFS1. Interacts (in both their reduced and oxidized states) with the cysteine desulfurase complex; this interaction stimulates cysteine desulfurase activity, and serves as a reductant for Fe-S cluster assembly. [2Fe-2S] cluster serves as cofactor. As to expression, widely expressed, with highest levels in testis, kidney and brain (at protein level). Expressed in muscle (at protein level). Expressed in fibroblasts (at protein level).

It localises to the mitochondrion. Its subcellular location is the mitochondrion matrix. Functionally, electron donor, of the core iron-sulfur cluster (ISC) assembly complex, that acts to reduce the persulfide into sulfide during [2Fe-2S] clusters assembly on the scaffolding protein ISCU. The core iron-sulfur cluster (ISC) assembly complex is involved in the de novo synthesis of a [2Fe-2S] cluster, the first step of the mitochondrial iron-sulfur protein biogenesis. This process is initiated by the cysteine desulfurase complex (NFS1:LYRM4:NDUFAB1) that produces persulfide which is delivered on the scaffold protein ISCU in a FXN-dependent manner. Then this complex is stabilized by FDX2 which provides reducing equivalents to accomplish the [2Fe-2S] cluster assembly. Finally, the [2Fe-2S] cluster is transferred from ISCU to chaperone proteins, including HSCB, HSPA9 and GLRX5. Essential for coenzyme Q biosynthesis: together with FDXR, transfers the electrons required for the hydroxylation reaction performed by COQ6. In Homo sapiens (Human), this protein is Ferredoxin-2, mitochondrial.